A 355-amino-acid polypeptide reads, in one-letter code: Serum paraoxonase/arylesterase 1 (355 aa).

Cysteine 42 and cysteine 353 are disulfide-bonded. Positions 53 and 54 each coordinate Ca(2+). Residue histidine 115 is the Proton acceptor of the active site. Positions 117, 168, 169, and 224 each coordinate Ca(2+). An N-linked (GlcNAc...) asparagine glycan is attached at asparagine 253. Positions 269 and 270 each coordinate Ca(2+). N-linked (GlcNAc...) asparagine glycans are attached at residues asparagine 270 and asparagine 324.

It belongs to the paraoxonase family. In terms of assembly, homodimer. Heterooligomer with phosphate-binding protein (HPBP). Interacts with CLU. Ca(2+) serves as cofactor. Post-translationally, glycosylated. The signal sequence is not cleaved. In terms of processing, present in two forms, form B contains a disulfide bond, form A does not. Plasma, associated with HDL (at protein level). Expressed in liver, but not in heart, brain, placenta, lung, skeletal muscle, kidney or pancreas.

It localises to the secreted. Its subcellular location is the extracellular space. It catalyses the reaction a phenyl acetate + H2O = a phenol + acetate + H(+). The catalysed reaction is An aryl dialkyl phosphate + H2O = dialkyl phosphate + an aryl alcohol.. The enzyme catalyses an N-acyl-L-homoserine lactone + H2O = an N-acyl-L-homoserine + H(+). Hydrolyzes the toxic metabolites of a variety of organophosphorus insecticides. Capable of hydrolyzing a broad spectrum of organophosphate substrates and lactones, and a number of aromatic carboxylic acid esters. Mediates an enzymatic protection of low density lipoproteins against oxidative modification and the consequent series of events leading to atheroma formation. This chain is Serum paraoxonase/arylesterase 1 (PON1), found in Homo sapiens (Human).